We begin with the raw amino-acid sequence, 298 residues long: Inosose dehydratase (298 aa).

The protein belongs to the IolE/MocC family. The cofactor is glutathione. It depends on Co(2+) as a cofactor. Mn(2+) is required as a cofactor.

The enzyme catalyses scyllo-inosose = 3D-3,5/4-trihydroxycyclohexane-1,2-dione + H2O. It participates in polyol metabolism; myo-inositol degradation into acetyl-CoA; acetyl-CoA from myo-inositol: step 2/7. In terms of biological role, catalyzes the dehydration of inosose (2-keto-myo-inositol, 2KMI or 2,4,6/3,5-pentahydroxycyclohexanone) to 3D-(3,5/4)-trihydroxycyclohexane-1,2-dione (D-2,3-diketo-4-deoxy-epi-inositol). The sequence is that of Inosose dehydratase from Bacillus thuringiensis (strain Al Hakam).